A 644-amino-acid chain; its full sequence is Exoribonuclease 2 (644 aa).

Residues 189-516 enclose the RNB domain; sequence REDLTALDFV…NHRLLKAVIK (328 aa). The S1 motif domain maps to 561–643; that stretch reads DTRFAAEIVD…ETRSIIARPV (83 aa).

It belongs to the RNR ribonuclease family. RNase II subfamily.

It localises to the cytoplasm. It catalyses the reaction Exonucleolytic cleavage in the 3'- to 5'-direction to yield nucleoside 5'-phosphates.. Functionally, involved in mRNA degradation. Hydrolyzes single-stranded polyribonucleotides processively in the 3' to 5' direction. This Escherichia coli (strain ATCC 8739 / DSM 1576 / NBRC 3972 / NCIMB 8545 / WDCM 00012 / Crooks) protein is Exoribonuclease 2.